A 251-amino-acid polypeptide reads, in one-letter code: Uroporphyrinogen-III C-methyltransferase (251 aa).

Residues proline 17, 93–95, 123–124, methionine 177, and alanine 206 contribute to the S-adenosyl-L-homocysteine site; these read GGD and TS.

Belongs to the precorrin methyltransferase family.

The protein resides in the plastid. It is found in the chloroplast. It catalyses the reaction uroporphyrinogen III + 2 S-adenosyl-L-methionine = precorrin-2 + 2 S-adenosyl-L-homocysteine + H(+). It participates in cofactor biosynthesis; adenosylcobalamin biosynthesis; precorrin-2 from uroporphyrinogen III: step 1/1. Its pathway is porphyrin-containing compound metabolism; siroheme biosynthesis; precorrin-2 from uroporphyrinogen III: step 1/1. Its function is as follows. Catalyzes the two successive C-2 and C-7 methylation reactions involved in the conversion of uroporphyrinogen III to precorrin-2 via the intermediate formation of precorrin-1. It is a step in the biosynthesis of both cobalamin (vitamin B12) and siroheme. This chain is Uroporphyrinogen-III C-methyltransferase (cobA), found in Cyanidium caldarium (Red alga).